A 400-amino-acid chain; its full sequence is MSSLHKSRIADFQDVLKEPSIALEKLRELSFSGIPCEGGLRCLCWKILLNYLPLERASWTSILAKQRELYAQFLREMIIQPGIAKANMGVSREDVTFEDHPLNPNPDSRWNTYFKDNEVLLQIDKDVRRLCPDISFFQRATDYPCLLILDPQNEFETLRKRVEQTTLKSQTVARNRSGVTNMSSPHKNSVPSSLNEYEVLPNGCEAHWEVVERILFIYAKLNPGIAYVQGMNEIVGPLYYTFATDPNSEWKEHAEADTFFCFTNLMAEIRDNFIKSLDDSQCGITYKMEKVYSTLKDKDVELYLKLQEQNIKPQFFAFRWLTLLLSQEFLLPDVIRIWDSLFADDNRFDFLLLVCCAMLMLIREQLLEGDFTVNMRLLQDYPITDVCQILQKAKELQDSK.

The region spanning proline 35–aspartate 345 is the Rab-GAP TBC domain.

Interacts with RAB1A and RAB10; in a GTP-dependent manner.

The protein resides in the membrane. It localises to the cytoplasm. Functionally, acts as a GTPase-activating protein for RAB35. Together with RAB35 may be involved in regulation of insulin-induced glucose transporter SLC2A4/GLUT4 translocation to the plasma membrane in adipocytes. The protein is TBC1 domain family member 13 (TBC1D13) of Homo sapiens (Human).